A 1108-amino-acid polypeptide reads, in one-letter code: Isoleucine--tRNA ligase (1108 aa).

The 'HIGH' region signature appears at 53–63; that stretch reads PFANGLPHYGH. The 'KMSKS' region motif lies at 654-658; it reads KLSKR. K657 is an ATP binding site.

The protein belongs to the class-I aminoacyl-tRNA synthetase family. IleS type 2 subfamily. In terms of assembly, monomer. Zn(2+) serves as cofactor.

The protein localises to the cytoplasm. The catalysed reaction is tRNA(Ile) + L-isoleucine + ATP = L-isoleucyl-tRNA(Ile) + AMP + diphosphate. Functionally, catalyzes the attachment of isoleucine to tRNA(Ile). As IleRS can inadvertently accommodate and process structurally similar amino acids such as valine, to avoid such errors it has two additional distinct tRNA(Ile)-dependent editing activities. One activity is designated as 'pretransfer' editing and involves the hydrolysis of activated Val-AMP. The other activity is designated 'posttransfer' editing and involves deacylation of mischarged Val-tRNA(Ile). In Rickettsia bellii (strain OSU 85-389), this protein is Isoleucine--tRNA ligase.